The following is a 169-amino-acid chain: EP300-interacting inhibitor of differentiation 1 (169 aa).

The segment at 31-50 (GRGARGPAPEEGPMEEEAGP) is disordered. An interaction with NR0B2 region spans residues 54-120 (RAQRGLFPEA…AGDALDGGFQ (67 aa)). Positions 150 to 154 (LGCDE) match the LXCXE motif motif.

As to quaternary structure, interacts via its LXCXE motif with the entire pocket region of RB1. Interacts with EP300, NR0B2 and TRIM27. Expressed in all adult tissues examined and during embryogenesis.

Its subcellular location is the nucleus. It is found in the cytoplasm. Interacts with RB1 and EP300 and acts as a repressor of MYOD1 transactivation. Inhibits EP300 and CBP histone acetyltransferase activity. May be involved in coupling cell cycle exit to the transcriptional activation of genes required for cellular differentiation. May act as a candidate coinhibitory factor for NR0B2 that can be directly linked to transcription inhibitory mechanisms. This is EP300-interacting inhibitor of differentiation 1 from Mus musculus (Mouse).